Here is an 87-residue protein sequence, read N- to C-terminus: Small ribosomal subunit protein uS15 (87 aa).

Belongs to the universal ribosomal protein uS15 family. In terms of assembly, part of the 30S ribosomal subunit. Forms a bridge to the 50S subunit in the 70S ribosome, contacting the 23S rRNA.

Functionally, one of the primary rRNA binding proteins, it binds directly to 16S rRNA where it helps nucleate assembly of the platform of the 30S subunit by binding and bridging several RNA helices of the 16S rRNA. In terms of biological role, forms an intersubunit bridge (bridge B4) with the 23S rRNA of the 50S subunit in the ribosome. The polypeptide is Small ribosomal subunit protein uS15 (Alkaliphilus oremlandii (strain OhILAs) (Clostridium oremlandii (strain OhILAs))).